The sequence spans 422 residues: Enolase (422 aa).

Position 162 (Gln162) interacts with (2R)-2-phosphoglycerate. Glu204 acts as the Proton donor in catalysis. Residues Asp241, Glu284, and Asp311 each contribute to the Mg(2+) site. 4 residues coordinate (2R)-2-phosphoglycerate: Lys336, Arg365, Ser366, and Lys387. Lys336 (proton acceptor) is an active-site residue.

The protein belongs to the enolase family. It depends on Mg(2+) as a cofactor.

Its subcellular location is the cytoplasm. The protein localises to the secreted. The protein resides in the cell surface. The catalysed reaction is (2R)-2-phosphoglycerate = phosphoenolpyruvate + H2O. The protein operates within carbohydrate degradation; glycolysis; pyruvate from D-glyceraldehyde 3-phosphate: step 4/5. In terms of biological role, catalyzes the reversible conversion of 2-phosphoglycerate (2-PG) into phosphoenolpyruvate (PEP). It is essential for the degradation of carbohydrates via glycolysis. The sequence is that of Enolase from Bartonella quintana (strain Toulouse) (Rochalimaea quintana).